Reading from the N-terminus, the 786-residue chain is Polyribonucleotide nucleotidyltransferase (786 aa).

Residues Asp516 and Asp522 each coordinate Mg(2+). Residues 582–641 (PRVTTVKIPVDKIGMVIGPKGQTINAIQDETGAEISIEDDGTIYVGATNGPSAQAAVERV) form the KH domain. Residues 653-722 (GDRFLGTVVK…QRGKIYLDKV (70 aa)) enclose the S1 motif domain. Residues 722–786 (VRPEGAEGPA…SRPRRRTRHS (65 aa)) form a disordered region. Residues 727-738 (AEGPAEAAATDR) show a composition bias toward low complexity. The span at 739-778 (PAGRDRGDRAPRDRGDRGDRERGSRGPDRGDGGEGGGESR) shows a compositional bias: basic and acidic residues.

The protein belongs to the polyribonucleotide nucleotidyltransferase family. Requires Mg(2+) as cofactor.

Its subcellular location is the cytoplasm. The enzyme catalyses RNA(n+1) + phosphate = RNA(n) + a ribonucleoside 5'-diphosphate. Functionally, involved in mRNA degradation. Catalyzes the phosphorolysis of single-stranded polyribonucleotides processively in the 3'- to 5'-direction. The sequence is that of Polyribonucleotide nucleotidyltransferase from Salinispora arenicola (strain CNS-205).